Consider the following 399-residue polypeptide: Argininosuccinate synthase (399 aa).

8–16 (AYSGGLDTS) is an ATP binding site. Tyrosine 87 contributes to the L-citrulline binding site. Glycine 117 is a binding site for ATP. Residues threonine 119, asparagine 123, and aspartate 124 each coordinate L-aspartate. Asparagine 123 provides a ligand contact to L-citrulline. 4 residues coordinate L-citrulline: arginine 127, serine 175, glutamate 259, and tyrosine 271.

Belongs to the argininosuccinate synthase family. Type 1 subfamily. As to quaternary structure, homotetramer.

Its subcellular location is the cytoplasm. It carries out the reaction L-citrulline + L-aspartate + ATP = 2-(N(omega)-L-arginino)succinate + AMP + diphosphate + H(+). Its pathway is amino-acid biosynthesis; L-arginine biosynthesis; L-arginine from L-ornithine and carbamoyl phosphate: step 2/3. The polypeptide is Argininosuccinate synthase (Corynebacterium diphtheriae (strain ATCC 700971 / NCTC 13129 / Biotype gravis)).